The primary structure comprises 114 residues: Large ribosomal subunit protein uL22 (114 aa).

The protein belongs to the universal ribosomal protein uL22 family. Part of the 50S ribosomal subunit.

Functionally, this protein binds specifically to 23S rRNA; its binding is stimulated by other ribosomal proteins, e.g. L4, L17, and L20. It is important during the early stages of 50S assembly. It makes multiple contacts with different domains of the 23S rRNA in the assembled 50S subunit and ribosome. In terms of biological role, the globular domain of the protein is located near the polypeptide exit tunnel on the outside of the subunit, while an extended beta-hairpin is found that lines the wall of the exit tunnel in the center of the 70S ribosome. This Mycoplasmopsis agalactiae (strain NCTC 10123 / CIP 59.7 / PG2) (Mycoplasma agalactiae) protein is Large ribosomal subunit protein uL22.